The sequence spans 79 residues: RNA-binding protein Hfq (79 aa).

Positions 10 to 70 (DVFLKTVRKQ…ISTIMPGQPI (61 aa)) constitute a Sm domain.

The protein belongs to the Hfq family. Homohexamer.

Functionally, RNA chaperone that binds small regulatory RNA (sRNAs) and mRNAs to facilitate mRNA translational regulation in response to envelope stress, environmental stress and changes in metabolite concentrations. Also binds with high specificity to tRNAs. The protein is RNA-binding protein Hfq of Bartonella bacilliformis (strain ATCC 35685 / KC583 / Herrer 020/F12,63).